A 253-amino-acid polypeptide reads, in one-letter code: NTNETKVRFTGETAKIGVSLEMLGRIFNGAGKPIDGGPEIIPEKKLDINGYPLNPVSRNPPNAFVQTGISTIDGTNTLVRGQKLPIFSGSGLPHNTLAAQIARQAKVRGEGEQFAVVFAAMGITNEEANYFMEEFKKPGALENAVVFINLANDPAIERIITPRLALTTAEYLAYEKDMHVLVVLTDMTNYCEALREIAAARNEVPGRRGYPGYMYTDLATLYERAGRVKGRKGTVTQIPILTMPHDDITHPIP.

It belongs to the ATPase alpha/beta chains family. As to quaternary structure, has multiple subunits with at least A(3), B(3), C, D, E, F, H, I and proteolipid K(x).

It is found in the cell membrane. Functionally, component of the A-type ATP synthase that produces ATP from ADP in the presence of a proton gradient across the membrane. The B chain is a regulatory subunit. This is A-type ATP synthase subunit B from Methanothermococcus thermolithotrophicus (Methanococcus thermolithotrophicus).